A 144-amino-acid polypeptide reads, in one-letter code: Hemoglobin subunit alpha-1 (144 aa).

Residue S1 is modified to N-acetylserine. The Globin domain maps to 1–144; it reads SLTAKDKSVV…VSAALADKYR (144 aa). H61 is an O2 binding site. Residue H90 participates in heme b binding.

It belongs to the globin family. Heterotetramer of two alpha chains and two beta chains. As to expression, red blood cells.

In terms of biological role, involved in oxygen transport from gills to the various peripheral tissues. In Oncorhynchus mykiss (Rainbow trout), this protein is Hemoglobin subunit alpha-1 (hba1).